Consider the following 380-residue polypeptide: Ubiquitin-like protein 7 (380 aa).

In terms of domain architecture, Ubiquitin-like spans 18 to 98 (APKSILRLPE…VLRKSWPEPD (81 aa)). The disordered stretch occupies residues 201 to 313 (PMPGADSSSR…SSSVQSGTPI (113 aa)). Position 230 is a phosphoserine (Ser230). Composition is skewed to low complexity over residues 239 to 255 (SARS…RPAS) and 270 to 312 (SELA…SGTP). Positions 333-377 (SLQSQWQPQLQQLRDMGIQDDELSLRALQATGGDIQAALELIFAG) constitute a UBA domain.

In terms of assembly, binds ubiquitin. Interacts with MAVS; this interaction enhances TRIM21-dependent 'Lys-27'-linked polyubiquitination of MAVS. Deubiquitinated by OTUD4 which stabilizes UBL7 expression.

Interferon-stimulated protein that positively regulates RNA virus-triggered innate immune signaling. Mechanistically, promotes 'Lys-27'-linked polyubiquitination of MAVS through TRIM21 leading to enhanced the IFN signaling pathway. This is Ubiquitin-like protein 7 (UBL7) from Bos taurus (Bovine).